A 452-amino-acid polypeptide reads, in one-letter code: Phosphoglucosamine mutase (452 aa).

Residue serine 98 is the Phosphoserine intermediate of the active site. Positions 98, 239, 241, and 243 each coordinate Mg(2+). Serine 98 carries the phosphoserine modification.

The protein belongs to the phosphohexose mutase family. The cofactor is Mg(2+). Post-translationally, activated by phosphorylation.

The catalysed reaction is alpha-D-glucosamine 1-phosphate = D-glucosamine 6-phosphate. Its function is as follows. Catalyzes the conversion of glucosamine-6-phosphate to glucosamine-1-phosphate. The chain is Phosphoglucosamine mutase from Anaplasma marginale (strain Florida).